The sequence spans 503 residues: MDLIPSFSLETWVLLALSLVLLYQYATYSHGFFKKLGIPGPKPLPLFGNVLSYRKGIWNFDIECHKKYGNMWGLYDGPRPVLSITEPDMIKAVLVKECYSVFTNRRSIFPAGFMKKALSISKDEEWKRIRTQLSQNFTSGKLKEMFPIIKQYGDVLVKNLRQEAEKGKPVQLKEIFGAYSMDIIIATAFGVNVDSLNNPHDPFVSKASKLFRFDFLSPFLLSVVIFPFLTQLYEMLNISIFPRDSLNFFTKFVKRTKENHLESNEKQRVNFLQMMLKSQNFKDTESHKALSDVEILAQSIFFIVAGYETTSSTLCFIMYSLATHPDVQKKLQQEIDKTLPNKAFPTYDVMMEMEYLDMVVNETLRLYPVTNRIERMSKKDFEINGMSFPKGTGVMIPSFALHRDSKYWPEPDEFRPERFSKKNKENIDPYIYMPFGNGPRNCIGMRMALMNLKLALIRLLQNFSFYTCKETQIPLRLGSQVILQPAKPIILKVVSRDETIRGA.

Cys442 is a heme binding site.

This sequence belongs to the cytochrome P450 family. Heme serves as cofactor.

Its subcellular location is the endoplasmic reticulum membrane. The protein resides in the microsome membrane. It catalyses the reaction an organic molecule + reduced [NADPH--hemoprotein reductase] + O2 = an alcohol + oxidized [NADPH--hemoprotein reductase] + H2O + H(+). Its function is as follows. Cytochromes P450 are a group of heme-thiolate monooxygenases. In liver microsomes, this enzyme is involved in an NADPH-dependent electron transport pathway. It oxidizes a variety of structurally unrelated compounds, including steroids, fatty acids, and xenobiotics. In Cavia porcellus (Guinea pig), this protein is Cytochrome P450 3A17 (CYP3A17).